Reading from the N-terminus, the 118-residue chain is Vesicle-associated membrane protein 1 (118 aa).

Positions 1–36 (MSAPAQPPAEGTEGTAPGGGPPGPPPNMTSNRRLQQ) are disordered. Residues 1 to 96 (MSAPAQPPAE…KRKYWWKNCK (96 aa)) lie on the Cytoplasmic side of the membrane. The v-SNARE coiled-coil homology domain maps to 33–93 (RLQQTQAQVE…AKLKRKYWWK (61 aa)). A Phosphoserine modification is found at serine 63. The chain crosses the membrane as a helical; Anchor for type IV membrane protein span at residues 97–116 (MMIMLGAICAIIVVVIVIYF). Residues 117–118 (FT) lie on the Vesicular side of the membrane.

The protein belongs to the synaptobrevin family. Interacts with VAPA and VAPB. In terms of processing, (Microbial infection) Targeted and hydrolyzed by C.botulinum neurotoxin type B (BoNT/B, botB) which probably hydrolyzes the 78-Gln-|-Phe-79 bond and inhibits neurotransmitter release. Post-translationally, (Microbial infection) Targeted and hydrolyzed by C.botulinum neurotoxin type D (BoNT/D, botD) which probably hydrolyzes the 61-Arg-|-Leu-62 bond and inhibits neurotransmitter release. BoNT/D has low catalytic activity on this protein due to its sequence. Note that humans are not known to be infected by C.botulinum type D. (Microbial infection) Targeted and hydrolyzed by C.botulinum neurotoxin type F (BoNT/F, botF) which probably hydrolyzes the 60-Gln-|-Lys-61 bond and inhibits neurotransmitter release. In terms of processing, (Microbial infection) Targeted and hydrolyzed by C.botulinum neurotoxin type X (BoNT/X) which probably hydrolyzes the 68-Arg-|-Ala-69 bond and inhibits neurotransmitter release. It remains unknown whether BoNT/X is ever produced, or what organisms it targets. In terms of tissue distribution, nervous system, skeletal muscle and adipose tissue.

It is found in the cytoplasmic vesicle. The protein localises to the secretory vesicle. The protein resides in the synaptic vesicle membrane. Its subcellular location is the synapse. It localises to the synaptosome. It is found in the cytoplasmic vesicle membrane. The protein localises to the mitochondrion outer membrane. Involved in the targeting and/or fusion of transport vesicles to their target membrane. The polypeptide is Vesicle-associated membrane protein 1 (VAMP1) (Homo sapiens (Human)).